The sequence spans 439 residues: Ribosomal protein uS12 methylthiotransferase RimO (439 aa).

The MTTase N-terminal domain maps to 7–119 (KQLCLISLGC…IDIMIAKKQN (113 aa)). [4Fe-4S] cluster is bound by residues cysteine 16, cysteine 50, cysteine 82, cysteine 151, cysteine 155, and cysteine 158. In terms of domain architecture, Radical SAM core spans 137-368 (TGSSVHAYVK…ALKHQNHSFK (232 aa)).

It belongs to the methylthiotransferase family. RimO subfamily. [4Fe-4S] cluster is required as a cofactor.

It is found in the cytoplasm. It catalyses the reaction L-aspartate(89)-[ribosomal protein uS12]-hydrogen + (sulfur carrier)-SH + AH2 + 2 S-adenosyl-L-methionine = 3-methylsulfanyl-L-aspartate(89)-[ribosomal protein uS12]-hydrogen + (sulfur carrier)-H + 5'-deoxyadenosine + L-methionine + A + S-adenosyl-L-homocysteine + 2 H(+). Catalyzes the methylthiolation of an aspartic acid residue of ribosomal protein uS12. This Helicobacter pylori (strain P12) protein is Ribosomal protein uS12 methylthiotransferase RimO.